The following is a 397-amino-acid chain: Phosphoglycerate kinase (397 aa).

Residues 25–27 (DLN), Arg-41, 64–67 (HLGR), Arg-118, and Arg-151 contribute to the substrate site. Residues Lys-202, Glu-324, and 350–353 (GGDT) each bind ATP.

Belongs to the phosphoglycerate kinase family. As to quaternary structure, monomer.

The protein localises to the cytoplasm. It catalyses the reaction (2R)-3-phosphoglycerate + ATP = (2R)-3-phospho-glyceroyl phosphate + ADP. The protein operates within carbohydrate degradation; glycolysis; pyruvate from D-glyceraldehyde 3-phosphate: step 2/5. The polypeptide is Phosphoglycerate kinase (Leptothrix cholodnii (strain ATCC 51168 / LMG 8142 / SP-6) (Leptothrix discophora (strain SP-6))).